The chain runs to 1377 residues: Carboxypeptidase D (1377 aa).

The N-terminal stretch at 1–37 (MASGRDERPPWRLGRLRLLPPPPLLLLLLLLRSSAQA) is a signal peptide. Residues 38 to 1296 (AHIKKAEATT…DNRIFGLPRE (1259 aa)) lie on the Extracellular side of the membrane. The region spanning 62–379 (HYYHEAALGE…ESLITLIEKV (318 aa)) is the Peptidase M14 1 domain. Zn(2+) contacts are provided by His138 and Glu141. Residues 161-163 (RGD) carry the Cell attachment site motif. Residues Asn171 and Asn216 are each glycosylated (N-linked (GlcNAc...) asparagine). Residues 188–231 (RAREGDCGLGDSGPPGTSGRDNSRGRDLNRSFPDQFSTGEPPSL) form a disordered region. Residue His256 coordinates Zn(2+). The residue at position 264 (Tyr264) is a Phosphotyrosine. Ser269 bears the Phosphoserine mark. The active-site Proton donor/acceptor is Glu349. 4 N-linked (GlcNAc...) asparagine glycosylation sites follow: Asn398, Asn409, Asn428, and Asn521. In terms of domain architecture, Peptidase M14 2 spans 501–791 (HHHHFPDMEI…RSLIQFMKQV (291 aa)). Residues His563 and Glu566 each coordinate Zn(2+). An N-linked (GlcNAc...) asparagine glycan is attached at Asn625. His670 is a Zn(2+) binding site. Glu761 (proton donor/acceptor) is an active-site residue. Residues Asn810, Asn854, Asn866, Asn878, Asn952, and Asn975 are each glycosylated (N-linked (GlcNAc...) asparagine). The tract at residues 874 to 898 (ADANNESKKGRGHSTSTDDTSDPTS) is disordered. Positions 929 to 1208 (RYHSYKDLSE…KSLLSMLVEV (280 aa)) constitute a Peptidase M14 3 domain. The span at 1038 to 1047 (RERAQEKDCT) shows a compositional bias: basic and acidic residues. Positions 1038–1064 (RERAQEKDCTSKTGHTNAHGKDLDTDF) are disordered. N-linked (GlcNAc...) asparagine glycosylation is found at Asn1067 and Asn1139. A helical transmembrane segment spans residues 1297–1317 (LVVTVSGATMSALILTACIIW). Residues Cys1314, Cys1318, and Cys1320 are each lipidated (S-palmitoyl cysteine). At 1318–1377 (CICSIKSNRHKDGFHRLRQHHDEYEDEIRMMSTGSKKSLLSHEFQDETDTEEETLYSSKH) the chain is on the cytoplasmic side. Phosphoserine occurs at positions 1355 and 1358. The disordered stretch occupies residues 1356-1377 (LLSHEFQDETDTEEETLYSSKH). Thr1365 and Thr1367 each carry phosphothreonine.

Belongs to the peptidase M14 family. Requires Zn(2+) as cofactor.

The protein localises to the cell membrane. The catalysed reaction is Releases C-terminal Arg and Lys from polypeptides.. This chain is Carboxypeptidase D (Cpd), found in Mus musculus (Mouse).